Reading from the N-terminus, the 72-residue chain is Brevinin-2GHb (72 aa).

The first 22 residues, 1–22 (MFTMKKSLLLLFFLGTVSLSLC), serve as a signal peptide directing secretion. The propeptide occupies 23-42 (EQERGADEDDGGEMTEELKR). C66 and C72 are disulfide-bonded.

In terms of tissue distribution, expressed by the skin glands.

The protein localises to the secreted. Antimicrobial peptide. Active against the Gram-positive bacteria S.aureus FDA209P (MIC=16.5 ug/ml) and B.subtilis ATCC 6633 (MIC&gt;64 ug/ml), and the Gram-negative bacteria E.coli O111 (MIC=8.2 ug/ml) and E.coli ATCC 25922 (MIC=8.2 ug/ml). Not active against the fungus C.albicans. The chain is Brevinin-2GHb from Sylvirana guentheri (Gunther's frog).